Reading from the N-terminus, the 151-residue chain is Flavodoxin YqcA (151 aa).

Residues 4–145 form the Flavodoxin-like domain; that stretch reads IGIFVGTVYG…ISCPWVEAWA (142 aa). Residues 10-15 and 99-101 each bind FMN; these read TVYGNA and NFC.

Belongs to the flavodoxin family. MioC subfamily. As to quaternary structure, monomer. It depends on FMN as a cofactor.

In terms of biological role, probable electron transporter. This is Flavodoxin YqcA from Pectobacterium carotovorum subsp. carotovorum (Erwinia carotovora subsp. carotovora).